Here is a 78-residue protein sequence, read N- to C-terminus: Large ribosomal subunit protein bL28 (78 aa).

It belongs to the bacterial ribosomal protein bL28 family.

The protein is Large ribosomal subunit protein bL28 of Colwellia psychrerythraea (strain 34H / ATCC BAA-681) (Vibrio psychroerythus).